The primary structure comprises 70 residues: Translational regulator CsrA (70 aa).

The protein belongs to the CsrA/RsmA family. Homodimer; the beta-strands of each monomer intercalate to form a hydrophobic core, while the alpha-helices form wings that extend away from the core.

It is found in the cytoplasm. A translational regulator that binds mRNA to regulate translation initiation and/or mRNA stability. Usually binds in the 5'-UTR at or near the Shine-Dalgarno sequence preventing ribosome-binding, thus repressing translation. Its main target seems to be the major flagellin gene, while its function is anatagonized by FliW. This chain is Translational regulator CsrA, found in Clostridioides difficile (strain 630) (Peptoclostridium difficile).